A 95-amino-acid chain; its full sequence is Small ribosomal subunit protein bS6 (95 aa).

It belongs to the bacterial ribosomal protein bS6 family.

Functionally, binds together with bS18 to 16S ribosomal RNA. The sequence is that of Small ribosomal subunit protein bS6 (rpsF) from Halalkalibacterium halodurans (strain ATCC BAA-125 / DSM 18197 / FERM 7344 / JCM 9153 / C-125) (Bacillus halodurans).